The sequence spans 44 residues: uncharacterized protein (44 aa).

The protein resides in the plastid. The protein localises to the chloroplast. This is an uncharacterized protein from Trieres chinensis (Marine centric diatom).